Consider the following 252-residue polypeptide: Imidazole glycerol phosphate synthase subunit HisF (252 aa).

Residues aspartate 11 and aspartate 130 contribute to the active site.

This sequence belongs to the HisA/HisF family. As to quaternary structure, heterodimer of HisH and HisF.

It localises to the cytoplasm. It carries out the reaction 5-[(5-phospho-1-deoxy-D-ribulos-1-ylimino)methylamino]-1-(5-phospho-beta-D-ribosyl)imidazole-4-carboxamide + L-glutamine = D-erythro-1-(imidazol-4-yl)glycerol 3-phosphate + 5-amino-1-(5-phospho-beta-D-ribosyl)imidazole-4-carboxamide + L-glutamate + H(+). The protein operates within amino-acid biosynthesis; L-histidine biosynthesis; L-histidine from 5-phospho-alpha-D-ribose 1-diphosphate: step 5/9. IGPS catalyzes the conversion of PRFAR and glutamine to IGP, AICAR and glutamate. The HisF subunit catalyzes the cyclization activity that produces IGP and AICAR from PRFAR using the ammonia provided by the HisH subunit. The sequence is that of Imidazole glycerol phosphate synthase subunit HisF from Pelotomaculum thermopropionicum (strain DSM 13744 / JCM 10971 / SI).